We begin with the raw amino-acid sequence, 340 residues long: Leucine-rich repeat-containing protein 23 (340 aa).

The span at 1 to 27 (MSDEDDVDDVDAEQDEVESDKEIEEWE) shows a compositional bias: acidic residues. The disordered stretch occupies residues 1–38 (MSDEDDVDDVDAEQDEVESDKEIEEWEDYRKETEEASE). LRR repeat units lie at residues 89 to 110 (HLRY…NSLT), 111 to 134 (HLLW…PYLQ), 177 to 197 (SLHT…IYLP), 198 to 219 (KLKN…ENLS), 220 to 241 (NLTT…SQEM), and 243 to 264 (SLQY…AKLR). The interaction with RSPH9 stretch occupies residues 205 to 340 (AQNLLKKVEG…QDMEPYLPPV (136 aa)). One can recognise an LRRCT domain in the interval 277–315 (NPCADETDYRQEALVQMAHLERLDKEFYEDDDRAEAEEI). Residues 305 to 328 (EDDDRAEAEEIRQRLKEEQDQDLD) adopt a coiled-coil conformation. Residues 317-340 (QRLKEEQDQDLDPDQDMEPYLPPV) form a disordered region. The segment covering 323-333 (QDQDLDPDQDM) has biased composition (acidic residues).

Component of the axonemal radial spoke complex. Interacts with RSPH3A and RSPH3B. Interacts with RSPH9. As to expression, expressed in the testis (at protein level).

It is found in the cytoplasm. The protein localises to the cytoskeleton. Its subcellular location is the flagellum axoneme. Essential for sperm motility and male fertility. Plays an important role in the proper assembly of the third radial spoke (RS3) head and the bridge structure between RS2 and RS3 in the sperm flagella. This is Leucine-rich repeat-containing protein 23 (Lrrc23) from Mus musculus (Mouse).